The sequence spans 63 residues: Cecropin-A1 (63 aa).

Positions 1 to 19 are cleaved as a signal peptide; sequence MNFYNIFVFVALILAITIG. R62 is subject to Arginine amide.

The protein belongs to the cecropin family.

It localises to the secreted. Functionally, cecropins have lytic and antibacterial activity against several Gram-positive and Gram-negative bacteria. This is Cecropin-A1 (CecA1) from Drosophila simulans (Fruit fly).